The sequence spans 397 residues: tRNA-specific 2-thiouridylase MnmA (397 aa).

ATP is bound by residues 19-26 (AMSGGVDS) and Leu45. Cys113 acts as the Nucleophile in catalysis. An intrachain disulfide couples Cys113 to Cys210. Gly137 contributes to the ATP binding site. An interaction with tRNA region spans residues 160 to 162 (RDQ). Cys210 functions as the Cysteine persulfide intermediate in the catalytic mechanism.

The protein belongs to the MnmA/TRMU family.

The protein localises to the cytoplasm. It catalyses the reaction S-sulfanyl-L-cysteinyl-[protein] + uridine(34) in tRNA + AH2 + ATP = 2-thiouridine(34) in tRNA + L-cysteinyl-[protein] + A + AMP + diphosphate + H(+). Its function is as follows. Catalyzes the 2-thiolation of uridine at the wobble position (U34) of tRNA, leading to the formation of s(2)U34. The chain is tRNA-specific 2-thiouridylase MnmA from Bradyrhizobium sp. (strain ORS 278).